A 1476-amino-acid polypeptide reads, in one-letter code: MCSIADLDGIGPFSSNPQCGHLSFTLLFEEAVLAAVPLGLCVVLALLRVRQLRLQSPKARRDRLYYAKLTALFLLASVQLVQLIQWTRPSTPKTRASIAIAAVSFASTIVFIGLCHLEHIRSAKPSDLLTLYFVTCIAFDIIRTRTLWIVSGGTAVASTFTVGLVLRLLFALLESRPKTRALQRQYLRESPEARTSLINRLFFWWVNPLLWTGFKRILDPGHLFNLDRHISSSHLFHVSAQRLNDTDLSKSYAVLLLCLREYKWTFLAGVLPRLALTGFTFAQPFLVTRFLSYESNRDARDAGATGTWLIVAYAGVYIGIAISQAGYIHQTFRFITMVRGSLLTLLYHDTMNKGSSAGIDPTSAELTLVSADIEKIQMGLQTMHQAWASFVDICLATWLLERHLGLATIPSVGFSLLCVVFGGGVAVMAGSRQTLWLEAIQKRLGLTSDVINMFKSVKMTALVNISAARVLELRDKEITVSKKFRRCLVFMVSLTYLSNVFAPIIGFTTYTLAPAIHKNNILDSARAFSSLTIFALLTEGVGSFVHSAVNLMLAVSSFERYRTTLLEKHTWHESKKASRRWTLTAPPLLENTDAEQWALEVLAATADAHTPPDDKQVCIQARDTNIGWSSEKIVVQSLSLVVRKREITLVTGPTNSGKSTLLRAMLGEAWIEGPALHRHFDRAAYCDQIPWLANKTIRQNILGGSPVDEDWYETTLQACQLKPDLGRLAQGDQTVVGNEGSRLSGGQRTRVALARAVYSRLDIMLLDDITSGLDPNTTKSIVEALFGKDGLFRRAGQTVVVASNNASFLSLADQVVDLGSGSPKVTRRNVESSSPVTAHVHNQTSPKGSRIDSARGSLDEISVADFRLEEPKREPRRLDSDTSIYMYYVRTVGVVNTAVFLALCMALVFAMVFPSIWVAWWVEANARGETNQLAKYLLVYFFLGVAALIALIGGGSHLMLRMVPRSARILHRALLDAVVVAPVPFMTRNDAGETLNRFSQDLEIIDTDVPLSGFTTLFAFITCIAQAIVVCVSSPFVTAGMVPTLVLVYFIQKFYLRTSPQLRALDLEAKAPLIGHMQETLRGLATIRAFGWAEDYEERNMRLVDESQKPFYQLTCIQRWLGLVLDLVVAGIAILLAIVIVSDKNGGATSGFLGIALTSLVSFGLNLGGFIGGWTGLETALTAVARVKRFSADTAKEDLPEECQTPPTDWPQRGEIVFDDVTASYGPGTTDVLSNVSFRISPGEKIGIIGRTGSGKSSLVSTLSRTLDLISGSILIDSIPLSSLPRDTVRQALINMPQDAFVLHGSIRTNVDPRSRLTDEAITEVLTELGLWPILAPLGGLDADAVSALPAQGLKQLLCFARVLAQPGRVMVLDEATSRLDPEASAKVKQAIMRRSEGRTLLTVAHKIDELDGYDRIMVVDAGKVVAFDTPGAVQGYLSSSSPTSSPTCSSSAAALSSGAHRVAAVGVLGTEAGRA.

5 helical membrane-spanning segments follow: residues 26–46 (LLFE…VLAL), 64–84 (LYYA…VQLI), 97–117 (SIAI…LCHL), 122–142 (SAKP…FDII), and 146–166 (TLWI…GLVL). Residue asparagine 244 is glycosylated (N-linked (GlcNAc...) asparagine). 4 consecutive transmembrane segments (helical) span residues 266 to 286 (FLAG…QPFL), 302 to 322 (AGAT…GIAI), 380 to 400 (LQTM…TWLL), and 409 to 429 (IPSV…AVMA). The 280-residue stretch at 274-553 (LALTGFTFAQ…FVHSAVNLML (280 aa)) folds into the ABC transmembrane type-1 1 domain. A glycan (N-linked (GlcNAc...) asparagine) is linked at asparagine 464. 2 helical membrane passes run 487 to 507 (CLVF…IIGF) and 533 to 553 (IFAL…NLML). The ABC transporter 1 domain maps to 619–845 (IQARDTNIGW…VTAHVHNQTS (227 aa)). 652–659 (GPTNSGKS) is a binding site for ATP. N-linked (GlcNAc...) asparagine glycans are attached at residues asparagine 694, asparagine 776, asparagine 805, and asparagine 842. Helical transmembrane passes span 898-918 (AVFL…SIWV), 936-956 (YLLV…GGGS), 1017-1037 (LFAF…SPFV), 1121-1141 (LGLV…IVIV), and 1151-1171 (GFLG…GGFI). The 282-residue stretch at 898–1179 (AVFLALCMAL…FIGGWTGLET (282 aa)) folds into the ABC transmembrane type-1 2 domain. Residues 1216-1447 (IVFDDVTASY…LSSSSPTSSP (232 aa)) enclose the ABC transporter 2 domain. A glycan (N-linked (GlcNAc...) asparagine) is linked at asparagine 1235. 1250–1257 (GRTGSGKS) contacts ATP.

This sequence belongs to the ABC transporter superfamily. ABCC family. Conjugate transporter (TC 3.A.1.208) subfamily.

It localises to the cell membrane. In terms of biological role, ABC-type transporter; part of the gene cluster that mediates the biosynthesis of the antifungal antibiotic FR901469, an inhibitor of beta-1,3-glucansynthase, exerting antifungal activity against the pathogenes Candida albicans and Aspergillus fumigatus. FR901469 is a cyclic depsipeptide containing 12 amino acid residues and a fatty acid chain. Probably involved in the secretion of FR901469. In Dothideomycetidae sp. (strain 11243) (Fungal sp. (strain No.11243)), this protein is ABC-type transporter frbG.